The chain runs to 250 residues: Glutathione transferase omega-1 (250 aa).

The GST N-terminal domain maps to 21–101; it reads SKGSFRVYNM…YLDDAFPETR (81 aa). Catalysis depends on Cys33, which acts as the Nucleophile. Glutathione-binding positions include Lys60 and 85 to 86; that span reads ES. Residues 106 to 234 form the GST C-terminal domain; sequence DPYEKVQQKL…TQSLEHGAAF (129 aa).

This sequence belongs to the GST superfamily. Omega family. As to quaternary structure, homodimer. Expressed in the intestinal cells.

The protein resides in the cytoplasm. The enzyme catalyses RX + glutathione = an S-substituted glutathione + a halide anion + H(+). The catalysed reaction is L-dehydroascorbate + 2 glutathione = glutathione disulfide + L-ascorbate. It catalyses the reaction methylarsonate + 2 glutathione + H(+) = methylarsonous acid + glutathione disulfide + H2O. Functionally, exhibits glutathione-dependent thiol transferase activity. Has dehydroascorbate reductase activity and may contribute to the recycling of ascorbic acid. Participates in the biotransformation of inorganic arsenic and reduces monomethylarsonic acid (MMA). Protects against environmental stress and oxidative stress. The sequence is that of Glutathione transferase omega-1 (gsto-1) from Caenorhabditis elegans.